We begin with the raw amino-acid sequence, 623 residues long: Endoglucanase 12 (623 aa).

The Cytoplasmic segment spans residues 1-73; that stretch reads MYSANHWGGS…LGCVVVKRKL (73 aa). Residues 74-94 form a helical; Signal-anchor for type II membrane protein membrane-spanning segment; sequence LWWVLWTLLAAFILIGLPVII. Residues 95–623 lie on the Extracellular side of the membrane; the sequence is AKSIPKKKPH…TPPPPSKWKP (529 aa). Catalysis depends on D166, which acts as the Nucleophile. Residues N217, N236, N324, N345, N408, and N425 are each glycosylated (N-linked (GlcNAc...) asparagine). Catalysis depends on residues H513, D561, and E570.

This sequence belongs to the glycosyl hydrolase 9 (cellulase E) family. As to expression, ubiquitous.

It is found in the membrane. It carries out the reaction Endohydrolysis of (1-&gt;4)-beta-D-glucosidic linkages in cellulose, lichenin and cereal beta-D-glucans.. This Oryza sativa subsp. japonica (Rice) protein is Endoglucanase 12 (GLU3).